Here is a 545-residue protein sequence, read N- to C-terminus: CTP synthase (545 aa).

The segment at 1 to 266 (MTTRYIFVTG…DELVIKRFNI (266 aa)) is amidoligase domain. Residue Ser-14 coordinates CTP. Ser-14 is a binding site for UTP. Residues 15 to 20 (SLGKGI) and Asp-72 each bind ATP. The Mg(2+) site is built by Asp-72 and Glu-140. Residues 147–149 (DIE), 187–192 (KTKPTQ), and Lys-223 each bind CTP. UTP contacts are provided by residues 187–192 (KTKPTQ) and Lys-223. Residue 239-241 (KDV) participates in ATP binding. The Glutamine amidotransferase type-1 domain maps to 291–542 (TIGMVGKYIE…IAASLSHQKR (252 aa)). Residue Gly-352 participates in L-glutamine binding. The active-site Nucleophile; for glutamine hydrolysis is Cys-379. L-glutamine contacts are provided by residues 380 to 383 (LGMQ), Glu-403, and Arg-470. Active-site residues include His-515 and Glu-517.

This sequence belongs to the CTP synthase family. In terms of assembly, homotetramer.

The enzyme catalyses UTP + L-glutamine + ATP + H2O = CTP + L-glutamate + ADP + phosphate + 2 H(+). The catalysed reaction is L-glutamine + H2O = L-glutamate + NH4(+). It carries out the reaction UTP + NH4(+) + ATP = CTP + ADP + phosphate + 2 H(+). The protein operates within pyrimidine metabolism; CTP biosynthesis via de novo pathway; CTP from UDP: step 2/2. With respect to regulation, allosterically activated by GTP, when glutamine is the substrate; GTP has no effect on the reaction when ammonia is the substrate. The allosteric effector GTP functions by stabilizing the protein conformation that binds the tetrahedral intermediate(s) formed during glutamine hydrolysis. Inhibited by the product CTP, via allosteric rather than competitive inhibition. Its function is as follows. Catalyzes the ATP-dependent amination of UTP to CTP with either L-glutamine or ammonia as the source of nitrogen. Regulates intracellular CTP levels through interactions with the four ribonucleotide triphosphates. This chain is CTP synthase, found in Shewanella denitrificans (strain OS217 / ATCC BAA-1090 / DSM 15013).